A 598-amino-acid polypeptide reads, in one-letter code: Aspartate--tRNA(Asp/Asn) ligase (598 aa).

Glutamate 177 lines the L-aspartate pocket. The aspartate stretch occupies residues 201 to 204 (QLFK). Arginine 223 lines the L-aspartate pocket. Residues 223–225 (RDE) and glutamine 232 each bind ATP. Histidine 456 contacts L-aspartate. Glutamate 493 provides a ligand contact to ATP. Arginine 500 provides a ligand contact to L-aspartate. ATP is bound at residue 545–548 (GLDR).

The protein belongs to the class-II aminoacyl-tRNA synthetase family. Type 1 subfamily. In terms of assembly, homodimer.

It is found in the cytoplasm. It carries out the reaction tRNA(Asx) + L-aspartate + ATP = L-aspartyl-tRNA(Asx) + AMP + diphosphate. Aspartyl-tRNA synthetase with relaxed tRNA specificity since it is able to aspartylate not only its cognate tRNA(Asp) but also tRNA(Asn). Reaction proceeds in two steps: L-aspartate is first activated by ATP to form Asp-AMP and then transferred to the acceptor end of tRNA(Asp/Asn). In Prochlorococcus marinus (strain AS9601), this protein is Aspartate--tRNA(Asp/Asn) ligase.